Reading from the N-terminus, the 550-residue chain is Glucose-6-phosphate isomerase (550 aa).

Glutamate 356 acts as the Proton donor in catalysis. Active-site residues include histidine 387 and lysine 515.

It belongs to the GPI family.

Its subcellular location is the cytoplasm. It carries out the reaction alpha-D-glucose 6-phosphate = beta-D-fructose 6-phosphate. The protein operates within carbohydrate biosynthesis; gluconeogenesis. It functions in the pathway carbohydrate degradation; glycolysis; D-glyceraldehyde 3-phosphate and glycerone phosphate from D-glucose: step 2/4. Its function is as follows. Catalyzes the reversible isomerization of glucose-6-phosphate to fructose-6-phosphate. This is Glucose-6-phosphate isomerase from Photobacterium profundum (strain SS9).